We begin with the raw amino-acid sequence, 539 residues long: CTP synthase (539 aa).

Residues 1–267 (MTKYIFVTGG…DQKVCDFLHL (267 aa)) form an amidoligase domain region. S13 contacts CTP. S13 provides a ligand contact to UTP. 14–19 (SLGKGI) serves as a coordination point for ATP. Position 54 (Y54) interacts with L-glutamine. D71 contacts ATP. D71 and E141 together coordinate Mg(2+). CTP contacts are provided by residues 148-150 (DIE), 188-193 (KTKPTQ), and K224. UTP contacts are provided by residues 188 to 193 (KTKPTQ) and K224. A Glutamine amidotransferase type-1 domain is found at 294 to 537 (KITLVGKYVE…IGAASGLPAQ (244 aa)). G356 contacts L-glutamine. C383 acts as the Nucleophile; for glutamine hydrolysis in catalysis. L-glutamine contacts are provided by residues 384-387 (LGMQ), E407, and R465. Residues H510 and E512 contribute to the active site.

It belongs to the CTP synthase family. In terms of assembly, homotetramer.

It catalyses the reaction UTP + L-glutamine + ATP + H2O = CTP + L-glutamate + ADP + phosphate + 2 H(+). It carries out the reaction L-glutamine + H2O = L-glutamate + NH4(+). The enzyme catalyses UTP + NH4(+) + ATP = CTP + ADP + phosphate + 2 H(+). It functions in the pathway pyrimidine metabolism; CTP biosynthesis via de novo pathway; CTP from UDP: step 2/2. Its activity is regulated as follows. Allosterically activated by GTP, when glutamine is the substrate; GTP has no effect on the reaction when ammonia is the substrate. The allosteric effector GTP functions by stabilizing the protein conformation that binds the tetrahedral intermediate(s) formed during glutamine hydrolysis. Inhibited by the product CTP, via allosteric rather than competitive inhibition. In terms of biological role, catalyzes the ATP-dependent amination of UTP to CTP with either L-glutamine or ammonia as the source of nitrogen. Regulates intracellular CTP levels through interactions with the four ribonucleotide triphosphates. This chain is CTP synthase, found in Lactobacillus acidophilus (strain ATCC 700396 / NCK56 / N2 / NCFM).